Here is a 274-residue protein sequence, read N- to C-terminus: Undecaprenyl-diphosphatase 1 (274 aa).

The next 8 helical transmembrane spans lie at 4-24, 45-65, 84-104, 111-131, 146-166, 186-206, 217-237, and 249-269; these read LLLL…FLPI, SAVF…YEYW, HLAI…LSFG, LFND…IMWI, IGLK…IPGT, ATEF…LLDL, FDWS…LLLI, and FMVF…FAYT.

It belongs to the UppP family.

It is found in the cell inner membrane. The enzyme catalyses di-trans,octa-cis-undecaprenyl diphosphate + H2O = di-trans,octa-cis-undecaprenyl phosphate + phosphate + H(+). Functionally, catalyzes the dephosphorylation of undecaprenyl diphosphate (UPP). Confers resistance to bacitracin. This chain is Undecaprenyl-diphosphatase 1, found in Acinetobacter baylyi (strain ATCC 33305 / BD413 / ADP1).